Reading from the N-terminus, the 484-residue chain is MGSGLNDTLSRNYNGLELWEIIVIVLSAIFVVVLAISLWLTFRRKTSRSSSNLIPVSRQIPPSVPEEIKEIRVDEVSSSNGGNGYPSISEKFGDKEPEKGIKAESENGDSSRSGSFNHLEKKDGSSVSSANPLTAPSPLSGLPEFSHLGWGHWFTLRDLQMATNQFSRDNIIGDGGYGVVYRGNLVNGTPVAVKKLLNNLGQADKDFRVEVEAIGHVRHKNLVRLLGYCMEGTQRMLVYEYVNNGNLEQWLRGDNQNHEYLTWEARVKILIGTAKALAYLHEAIEPKVVHRDIKSSNILIDDKFNSKISDFGLAKLLGADKSFITTRVMGTFGYVAPEYANSGLLNEKSDVYSFGVVLLEAITGRYPVDYARPPPEVHLVEWLKMMVQQRRSEEVVDPNLETKPSTSALKRTLLTALRCVDPMSEKRPRMSQVARMLESEEYPIAREDRRRRRSQNGTTRDSDPPRNSTDTDKSEYHDLKPEGG.

A helical transmembrane segment spans residues 21–41 (IIVIVLSAIFVVVLAISLWLT). Residues 72 to 135 (RVDEVSSSNG…SVSSANPLTA (64 aa)) form a disordered region. Over residues 91–105 (KFGDKEPEKGIKAES) the composition is skewed to basic and acidic residues. The segment covering 125–134 (SSVSSANPLT) has biased composition (polar residues). Position 155 is a phosphothreonine (threonine 155). The region spanning 166–445 (FSRDNIIGDG…MLESEEYPIA (280 aa)) is the Protein kinase domain. ATP-binding positions include 172 to 180 (IGDGGYGVV) and lysine 194. Position 239 is a phosphotyrosine (tyrosine 239). Aspartate 292 serves as the catalytic Proton acceptor. A Phosphoserine modification is found at serine 296. Phosphothreonine is present on residues threonine 326 and threonine 331. Residue tyrosine 339 is modified to Phosphotyrosine. Positions 425–484 (EKRPRMSQVARMLESEEYPIAREDRRRRRSQNGTTRDSDPPRNSTDTDKSEYHDLKPEGG) are disordered. The segment covering 460–484 (RDSDPPRNSTDTDKSEYHDLKPEGG) has biased composition (basic and acidic residues).

Belongs to the protein kinase superfamily. Ser/Thr protein kinase family.

It is found in the cell membrane. It carries out the reaction L-seryl-[protein] + ATP = O-phospho-L-seryl-[protein] + ADP + H(+). The enzyme catalyses L-threonyl-[protein] + ATP = O-phospho-L-threonyl-[protein] + ADP + H(+). The chain is Probable receptor-like protein kinase At5g18500 from Arabidopsis thaliana (Mouse-ear cress).